A 169-amino-acid polypeptide reads, in one-letter code: UPF0398 protein Spy49_1277c (169 aa).

This sequence belongs to the UPF0398 family.

In Streptococcus pyogenes serotype M49 (strain NZ131), this protein is UPF0398 protein Spy49_1277c.